The following is an 820-amino-acid chain: 1,4-alpha-glucan-branching enzyme, chloroplastic/amyloplastic (820 aa).

Positions 1–20 are enriched in low complexity; that stretch reads MLCLTSSSSSAPAPLLPSLA. The segment at 1-28 is disordered; that stretch reads MLCLTSSSSSAPAPLLPSLADRPSPGIA. Residues 1–64 constitute a chloroplast transit peptide; it reads MLCLTSSSSS…SVPATARKNK (64 aa). The (1,4-alpha-D-glucosyl)n site is built by tryptophan 153 and lysine 188. Residue aspartate 409 is the Nucleophile of the active site. Glutamate 464 (proton donor) is an active-site residue.

It belongs to the glycosyl hydrolase 13 family. GlgB subfamily. In terms of assembly, monomer.

It is found in the plastid. The protein resides in the chloroplast. The protein localises to the amyloplast. It carries out the reaction Transfers a segment of a (1-&gt;4)-alpha-D-glucan chain to a primary hydroxy group in a similar glucan chain.. The protein operates within glycan biosynthesis; starch biosynthesis. In terms of biological role, catalyzes the formation of the alpha-1,6-glucosidic linkages in starch by scission of a 1,4-alpha-linked oligosaccharide from growing alpha-1,4-glucan chains and the subsequent attachment of the oligosaccharide to the alpha-1,6 position. This chain is 1,4-alpha-glucan-branching enzyme, chloroplastic/amyloplastic (SBE1), found in Oryza sativa subsp. japonica (Rice).